Consider the following 137-residue polypeptide: Large ribosomal subunit protein uL16 (137 aa).

This sequence belongs to the universal ribosomal protein uL16 family. As to quaternary structure, part of the 50S ribosomal subunit.

In terms of biological role, binds 23S rRNA and is also seen to make contacts with the A and possibly P site tRNAs. This chain is Large ribosomal subunit protein uL16, found in Thioalkalivibrio sulfidiphilus (strain HL-EbGR7).